The following is a 167-amino-acid chain: uncharacterized protein (167 aa).

Residues I4–D24 traverse the membrane as a helical segment.

It is found in the membrane. This is an uncharacterized protein from Rickettsia prowazekii (strain Madrid E).